Reading from the N-terminus, the 93-residue chain is Putative pterin-4-alpha-carbinolamine dehydratase (93 aa).

This sequence belongs to the pterin-4-alpha-carbinolamine dehydratase family.

The enzyme catalyses (4aS,6R)-4a-hydroxy-L-erythro-5,6,7,8-tetrahydrobiopterin = (6R)-L-erythro-6,7-dihydrobiopterin + H2O. This Nostoc punctiforme (strain ATCC 29133 / PCC 73102) protein is Putative pterin-4-alpha-carbinolamine dehydratase.